The chain runs to 714 residues: MLSFCDYFWSEDLVSGLDVLFDRLYHGCEQCDLFIQLFASRMQFEVSHGRQLFGIEAGMDNLKAVQEDEDEGVTVSRALRGILQEMSQEGTHHLTIASNIESLVLQPFSKWCIEHRERIQYSEKTLLTNVNNFRKSKKYVGKLEKEYFNKCRQLEEFKRTHFNEDELANAMKSLKIQNKYEEDVAREKDHRFFNRIAGIDFDYKTMKETLQLLLTKLPKTDYKLPLISYSLSNTNNGGEITKFLLDHMSLKDIDQAETFGQDLLNLGFLKYCNGVGNTFVNSKKFQYQWKNTAYMFANVPMPGSEEPTTGESLISRFNNWDGSSAKEIIQSKIGNDQGAAKIQAPHISDNERTLFRMMDALAASDKKYYQECFKMDALRCSVEELLIDHLSFMEKCESDRLNAIKKATLDFCSTLGNKISSLRLCIDKMLTLENDIDPTADLLQLLVKYKTGSFKPQAIVYNNYYNPGSFQNFGVDLETRCRLDKKVVPLIISSIFSYMDKIYPDLPNDKVRTSIWTDSVKLSLTHQLRNLLNKQQFHNEGEIFDILSTSKLEPSTIASVVKIYLLELPDPLIPNDVSDILRVLYLDYPPLVETALQNSTSSPENQQDDDNEEGFDTKRIRGLYTTLSSLSKPHIATLDAITTHFYRLIKILKMGENGNEVADEFTVSISQEFANCIIQSKITDDNEIGFKIFYDLLTHKKQIFHELKRQNSKN.

In terms of domain architecture, F-BAR spans leucine 2 to aspartate 441. In terms of domain architecture, DEP spans proline 218 to asparagine 298. The Rho-GAP domain occupies valine 475 to phenylalanine 704.

Interacts with CDC42 and RHO5.

Its function is as follows. Acts in signal transduction. Activates CDC42 and RHO5. The sequence is that of Rho-GTPase-activating protein RGD2 (RGD2) from Saccharomyces cerevisiae (strain ATCC 204508 / S288c) (Baker's yeast).